The primary structure comprises 253 residues: MAISIKSPKEIKALRKAGELTAQALALLEREVRPGVSLLELDKMAEDFIKSSHARPAFKGLYGFPNSVCMSLNEVVIHGIPTDYVLQEGDIIGLDLGVEVDGYYGDSALTLPIGAISPQDEKLLACSKESLMHAISSIRVGMHFKELSQILEGAITERGFVPLKGFCGHGIGKKPHEEPEIPNYLEKGVKANSGPKIKEGMVFCLEPMVCQKQGEPKILADKWSVVSVDGLNTSHHEHTIAIVGNKAVILTER.

Histidine 78 provides a ligand contact to substrate. Aspartate 95, aspartate 106, and histidine 169 together coordinate a divalent metal cation. Residue histidine 176 participates in substrate binding. Residues glutamate 206 and glutamate 237 each contribute to the a divalent metal cation site.

The protein belongs to the peptidase M24A family. Methionine aminopeptidase type 1 subfamily. As to quaternary structure, monomer. The cofactor is Co(2+). Zn(2+) is required as a cofactor. It depends on Mn(2+) as a cofactor. Requires Fe(2+) as cofactor.

The catalysed reaction is Release of N-terminal amino acids, preferentially methionine, from peptides and arylamides.. Functionally, removes the N-terminal methionine from nascent proteins. The N-terminal methionine is often cleaved when the second residue in the primary sequence is small and uncharged (Met-Ala-, Cys, Gly, Pro, Ser, Thr, or Val). Requires deformylation of the N(alpha)-formylated initiator methionine before it can be hydrolyzed. This chain is Methionine aminopeptidase, found in Helicobacter pylori (strain J99 / ATCC 700824) (Campylobacter pylori J99).